The chain runs to 349 residues: Phosphoribosylformylglycinamidine cyclo-ligase (349 aa).

Belongs to the AIR synthase family.

It localises to the cytoplasm. It catalyses the reaction 2-formamido-N(1)-(5-O-phospho-beta-D-ribosyl)acetamidine + ATP = 5-amino-1-(5-phospho-beta-D-ribosyl)imidazole + ADP + phosphate + H(+). Its pathway is purine metabolism; IMP biosynthesis via de novo pathway; 5-amino-1-(5-phospho-D-ribosyl)imidazole from N(2)-formyl-N(1)-(5-phospho-D-ribosyl)glycinamide: step 2/2. In Bordetella petrii (strain ATCC BAA-461 / DSM 12804 / CCUG 43448), this protein is Phosphoribosylformylglycinamidine cyclo-ligase.